The chain runs to 392 residues: Heat-inducible transcription repressor HrcA (392 aa).

This sequence belongs to the HrcA family.

Its function is as follows. Negative regulator of class I heat shock genes (grpE-dnaK-dnaJ and groELS operons). Prevents heat-shock induction of these operons. In Chlamydia trachomatis serovar D (strain ATCC VR-885 / DSM 19411 / UW-3/Cx), this protein is Heat-inducible transcription repressor HrcA.